The chain runs to 119 residues: Large ribosomal subunit protein uL18 (119 aa).

Belongs to the universal ribosomal protein uL18 family. Part of the 50S ribosomal subunit; part of the 5S rRNA/L5/L18/L25 subcomplex. Contacts the 5S and 23S rRNAs.

In terms of biological role, this is one of the proteins that bind and probably mediate the attachment of the 5S RNA into the large ribosomal subunit, where it forms part of the central protuberance. This Anaeromyxobacter dehalogenans (strain 2CP-1 / ATCC BAA-258) protein is Large ribosomal subunit protein uL18.